The primary structure comprises 79 residues: Sulfur carrier protein TusA (79 aa).

The active-site Cysteine persulfide intermediate is the Cys17.

This sequence belongs to the sulfur carrier protein TusA family.

It localises to the cytoplasm. In terms of biological role, sulfur carrier protein which probably makes part of a sulfur-relay system. In Mannheimia succiniciproducens (strain KCTC 0769BP / MBEL55E), this protein is Sulfur carrier protein TusA.